A 268-amino-acid polypeptide reads, in one-letter code: 4-hydroxy-tetrahydrodipicolinate reductase (268 aa).

Residues 10–15 (GASGRM), D36, 99–101 (GTT), and 123–126 (APNM) each bind NAD(+). H156 acts as the Proton donor/acceptor in catalysis. A (S)-2,3,4,5-tetrahydrodipicolinate-binding site is contributed by H157. K160 serves as the catalytic Proton donor. 166–167 (GT) is a binding site for (S)-2,3,4,5-tetrahydrodipicolinate.

Belongs to the DapB family.

Its subcellular location is the cytoplasm. It catalyses the reaction (S)-2,3,4,5-tetrahydrodipicolinate + NAD(+) + H2O = (2S,4S)-4-hydroxy-2,3,4,5-tetrahydrodipicolinate + NADH + H(+). It carries out the reaction (S)-2,3,4,5-tetrahydrodipicolinate + NADP(+) + H2O = (2S,4S)-4-hydroxy-2,3,4,5-tetrahydrodipicolinate + NADPH + H(+). The protein operates within amino-acid biosynthesis; L-lysine biosynthesis via DAP pathway; (S)-tetrahydrodipicolinate from L-aspartate: step 4/4. Functionally, catalyzes the conversion of 4-hydroxy-tetrahydrodipicolinate (HTPA) to tetrahydrodipicolinate. This Herminiimonas arsenicoxydans protein is 4-hydroxy-tetrahydrodipicolinate reductase.